A 393-amino-acid chain; its full sequence is Acetate kinase (393 aa).

Asparagine 7 is a Mg(2+) binding site. Lysine 14 contacts ATP. Arginine 90 is a substrate binding site. Residue aspartate 147 is the Proton donor/acceptor of the active site. Residues 205–209 (HLGNG), 280–282 (DFR), and 328–332 (GIGEN) contribute to the ATP site. A Mg(2+)-binding site is contributed by glutamate 380.

This sequence belongs to the acetokinase family. As to quaternary structure, homodimer. The cofactor is Mg(2+). It depends on Mn(2+) as a cofactor.

It is found in the cytoplasm. The catalysed reaction is acetate + ATP = acetyl phosphate + ADP. The protein operates within metabolic intermediate biosynthesis; acetyl-CoA biosynthesis; acetyl-CoA from acetate: step 1/2. In terms of biological role, catalyzes the formation of acetyl phosphate from acetate and ATP. Can also catalyze the reverse reaction. The sequence is that of Acetate kinase from Finegoldia magna (strain ATCC 29328 / DSM 20472 / WAL 2508) (Peptostreptococcus magnus).